A 175-amino-acid polypeptide reads, in one-letter code: Albumin-1 (175 aa).

Cysteines 135 and 141 form a disulfide.

It belongs to the protease inhibitor I3 (leguminous Kunitz-type inhibitor) family.

Functionally, 2S seed storage protein. This Psophocarpus tetragonolobus (Winged bean) protein is Albumin-1.